We begin with the raw amino-acid sequence, 263 residues long: MWFLILFLALFLGGIDAAPPVQSRIIGGFNCEKNSQPWHVAVYRFARYQCGGVLLDANWVLTAAHCYNDKYQVWLGKNNRFEDEPSAQHQLISKAIPHPGFNMSLLNKDHTPHPEDDYSNDLMLVRLKKPAEITDVVKPIDLPTEEPTVGSRCLASGWGSTTPTEEFEYSHDLQCVYLELLSNEVCAKAHTEKVTDTMLCAGEMDGGKDTCVGDSGGPLICDGVLQGITSWGPTPCALPNVPGIYTKLIEYRSWIKDVMANNP.

Residues 1–18 form the signal peptide; it reads MWFLILFLALFLGGIDAA. Positions 19-24 are cleaved as a propeptide — activation peptide; the sequence is PPVQSR. The Peptidase S1 domain maps to 25-260; it reads IIGGFNCEKN…YRSWIKDVMA (236 aa). 5 disulfide bridges follow: C31-C175, C50-C66, C153-C221, C186-C200, and C211-C236. Residue H65 is the Charge relay system of the active site. N102 is a glycosylation site (N-linked (GlcNAc...) asparagine). D121 functions as the Charge relay system in the catalytic mechanism. S215 functions as the Charge relay system in the catalytic mechanism.

The protein belongs to the peptidase S1 family. Kallikrein subfamily.

It carries out the reaction Preferential cleavage of Arg-|-Xaa bonds in small molecule substrates. Highly selective action to release kallidin (lysyl-bradykinin) from kininogen involves hydrolysis of Met-|-Xaa or Leu-|-Xaa.. In terms of biological role, glandular kallikreins cleave Met-Lys and Arg-Ser bonds in kininogen to release Lys-bradykinin. The chain is Renal glandular kallikrein from Mastomys natalensis (African soft-furred rat).